We begin with the raw amino-acid sequence, 216 residues long: GTP cyclohydrolase 1 (216 aa).

Positions 109, 112, and 180 each coordinate Zn(2+).

The protein belongs to the GTP cyclohydrolase I family. As to quaternary structure, toroid-shaped homodecamer, composed of two pentamers of five dimers.

The catalysed reaction is GTP + H2O = 7,8-dihydroneopterin 3'-triphosphate + formate + H(+). The protein operates within cofactor biosynthesis; 7,8-dihydroneopterin triphosphate biosynthesis; 7,8-dihydroneopterin triphosphate from GTP: step 1/1. This Wigglesworthia glossinidia brevipalpis protein is GTP cyclohydrolase 1.